Here is a 236-residue protein sequence, read N- to C-terminus: MLNPNIFHMPKIIIALDFCNKKSAMKLVNLLNPSIFYLKIGKEMFTILGCKFVKELHQLGFNIFLDLKFHDIPNTVFNATKAAADLGIWMLSVHASGGKEMLISAKKALKSFKKAPLLIAVTALTSFKEEALKEIGINISLTEYILKLSKLSNDCGLDGIVCPGKEAKKIKFLFGNKYKIITPGIRIAKDLLYDQNNIITPKEAKEYKIDYIVIGRSITMSKNPIKKLDLIIKSMQ.

Substrate contacts are provided by residues D17, K39, 66 to 75, T125, R186, Q195, G215, and R216; that span reads DLKFHDIPNT. K68 functions as the Proton donor in the catalytic mechanism.

This sequence belongs to the OMP decarboxylase family. Type 1 subfamily. In terms of assembly, homodimer.

It carries out the reaction orotidine 5'-phosphate + H(+) = UMP + CO2. Its pathway is pyrimidine metabolism; UMP biosynthesis via de novo pathway; UMP from orotate: step 2/2. In terms of biological role, catalyzes the decarboxylation of orotidine 5'-monophosphate (OMP) to uridine 5'-monophosphate (UMP). In Buchnera aphidicola subsp. Acyrthosiphon pisum (strain APS) (Acyrthosiphon pisum symbiotic bacterium), this protein is Orotidine 5'-phosphate decarboxylase.